A 94-amino-acid polypeptide reads, in one-letter code: MICOS complex subunit MIC12 (94 aa).

A helical membrane pass occupies residues 7 to 23 (YGSFSVVASVLGASYYY).

This sequence belongs to the MICOS complex subunit Mic12 family. Component of the mitochondrial contact site and cristae organizing system (MICOS) complex.

It is found in the mitochondrion inner membrane. Component of the MICOS complex, a large protein complex of the mitochondrial inner membrane that plays crucial roles in the maintenance of crista junctions, inner membrane architecture, and formation of contact sites to the outer membrane. The protein is MICOS complex subunit MIC12 (AIM5) of Eremothecium gossypii (strain ATCC 10895 / CBS 109.51 / FGSC 9923 / NRRL Y-1056) (Yeast).